A 159-amino-acid polypeptide reads, in one-letter code: Cyclic pyranopterin monophosphate synthase (159 aa).

Substrate contacts are provided by residues L75–H77 and M113–E114. D128 is an active-site residue.

Belongs to the MoaC family. In terms of assembly, homohexamer; trimer of dimers.

It carries out the reaction (8S)-3',8-cyclo-7,8-dihydroguanosine 5'-triphosphate = cyclic pyranopterin phosphate + diphosphate. Its pathway is cofactor biosynthesis; molybdopterin biosynthesis. Catalyzes the conversion of (8S)-3',8-cyclo-7,8-dihydroguanosine 5'-triphosphate to cyclic pyranopterin monophosphate (cPMP). This Yersinia pseudotuberculosis serotype IB (strain PB1/+) protein is Cyclic pyranopterin monophosphate synthase.